The sequence spans 431 residues: MGKNVVVLGTQWGDEGKGKIVDLLTDKAKYVVRYQGGHNAGHTLVIDGEKTVLHLIPSGVLRDNVKCLIGNGVVLCPKALMTEITMLEAKGVPVRERLLISDACPLILPYHNALDVAREVARGNKAIGTTGRGIGPAYEDKVARRGLRVGDLFCAETFAAKLKEIVEYHNFSLVNYYKVEPVNYEEVLADALAVADTIKKMTADISEILDQARIAGESIMFEGAQGTLLDIDHGTYPYVTSSNTTAGGVATGCGVGPRHLDYILGITKAYTTRVGSGPFPTELDDEVGNHLGTVGHEFGATTGRERRCGWFDAVAMHRAIQVNSVTGFCLTKLDVLDGLETLKICTGYKTEAGDIITVPPTAAEGYDKITPVYEEMPGWTESTVGATSVDVLPENALAYIKRIEEITGIPVDIISTGPDRVETIIKVNPFL.

GTP is bound by residues 13–19 and 41–43; these read GDEGKGK and GHT. The active-site Proton acceptor is the Asp-14. 2 residues coordinate Mg(2+): Asp-14 and Gly-41. Residues 14–17, 39–42, Thr-130, Arg-144, Gln-225, Thr-240, and Arg-304 each bind IMP; these read DEGK and NAGH. His-42 acts as the Proton donor in catalysis. 300-306 serves as a coordination point for substrate; sequence ATTGRER. GTP is bound by residues Arg-306, 332–334, and 415–417; these read KLD and STG.

Belongs to the adenylosuccinate synthetase family. Homodimer. It depends on Mg(2+) as a cofactor.

Its subcellular location is the cytoplasm. The enzyme catalyses IMP + L-aspartate + GTP = N(6)-(1,2-dicarboxyethyl)-AMP + GDP + phosphate + 2 H(+). Its pathway is purine metabolism; AMP biosynthesis via de novo pathway; AMP from IMP: step 1/2. In terms of biological role, plays an important role in the de novo pathway of purine nucleotide biosynthesis. Catalyzes the first committed step in the biosynthesis of AMP from IMP. The protein is Adenylosuccinate synthetase of Colwellia psychrerythraea (strain 34H / ATCC BAA-681) (Vibrio psychroerythus).